The following is a 434-amino-acid chain: Glucose-6-phosphate 1-dehydrogenase (434 aa).

Residues 7 to 14 (GSSGDLAK), R36, Y93, and K112 contribute to the NADP(+) site. Residues K112, 137 to 141 (HYLLK), E175, and D193 each bind D-glucose 6-phosphate. Catalysis depends on H198, which acts as the Proton acceptor. Residues K280 and K285 each coordinate D-glucose 6-phosphate. R286 lines the NADP(+) pocket.

It belongs to the glucose-6-phosphate dehydrogenase family.

The catalysed reaction is D-glucose 6-phosphate + NADP(+) = 6-phospho-D-glucono-1,5-lactone + NADPH + H(+). It participates in carbohydrate degradation; pentose phosphate pathway; D-ribulose 5-phosphate from D-glucose 6-phosphate (oxidative stage): step 1/3. In terms of biological role, catalyzes the rate-limiting step of the oxidative pentose-phosphate pathway, which represents a route for the dissimilation of carbohydrates besides glycolysis. The main function of this enzyme is to provide reducing power (NADPH) and pentose phosphates for fatty acid and nucleic acid synthesis. The protein is Glucose-6-phosphate 1-dehydrogenase (ZWF1) of Encephalitozoon cuniculi (strain GB-M1) (Microsporidian parasite).